The chain runs to 250 residues: Ubiquinone/menaquinone biosynthesis C-methyltransferase UbiE (250 aa).

S-adenosyl-L-methionine is bound by residues Thr-74, Asp-94, 122 to 123 (DA), and Ser-139.

The protein belongs to the class I-like SAM-binding methyltransferase superfamily. MenG/UbiE family.

The enzyme catalyses a 2-demethylmenaquinol + S-adenosyl-L-methionine = a menaquinol + S-adenosyl-L-homocysteine + H(+). It catalyses the reaction a 2-methoxy-6-(all-trans-polyprenyl)benzene-1,4-diol + S-adenosyl-L-methionine = a 5-methoxy-2-methyl-3-(all-trans-polyprenyl)benzene-1,4-diol + S-adenosyl-L-homocysteine + H(+). It participates in quinol/quinone metabolism; menaquinone biosynthesis; menaquinol from 1,4-dihydroxy-2-naphthoate: step 2/2. Its pathway is cofactor biosynthesis; ubiquinone biosynthesis. Its function is as follows. Methyltransferase required for the conversion of demethylmenaquinol (DMKH2) to menaquinol (MKH2) and the conversion of 2-polyprenyl-6-methoxy-1,4-benzoquinol (DDMQH2) to 2-polyprenyl-3-methyl-6-methoxy-1,4-benzoquinol (DMQH2). The chain is Ubiquinone/menaquinone biosynthesis C-methyltransferase UbiE from Cereibacter sphaeroides (strain ATCC 17029 / ATH 2.4.9) (Rhodobacter sphaeroides).